Consider the following 219-residue polypeptide: 3-dehydroquinate dehydratase (219 aa).

3-dehydroquinate-binding positions include S10, 29 to 31, and R59; that span reads EVR. H116 acts as the Proton donor/acceptor in catalysis. K142 (schiff-base intermediate with substrate) is an active-site residue. 3-dehydroquinate-binding residues include R180 and Q203.

Belongs to the type-I 3-dehydroquinase family. Homodimer.

It catalyses the reaction 3-dehydroquinate = 3-dehydroshikimate + H2O. It participates in metabolic intermediate biosynthesis; chorismate biosynthesis; chorismate from D-erythrose 4-phosphate and phosphoenolpyruvate: step 3/7. Involved in the third step of the chorismate pathway, which leads to the biosynthesis of aromatic amino acids. Catalyzes the cis-dehydration of 3-dehydroquinate (DHQ) and introduces the first double bond of the aromatic ring to yield 3-dehydroshikimate. The chain is 3-dehydroquinate dehydratase from Methanocella arvoryzae (strain DSM 22066 / NBRC 105507 / MRE50).